The following is a 556-amino-acid chain: Arginine--tRNA ligase (556 aa).

Positions 132–142 (ANPTGDLHLGH) match the 'HIGH' region motif.

Belongs to the class-I aminoacyl-tRNA synthetase family. In terms of assembly, monomer.

It is found in the cytoplasm. The catalysed reaction is tRNA(Arg) + L-arginine + ATP = L-arginyl-tRNA(Arg) + AMP + diphosphate. This chain is Arginine--tRNA ligase, found in Listeria welshimeri serovar 6b (strain ATCC 35897 / DSM 20650 / CCUG 15529 / CIP 8149 / NCTC 11857 / SLCC 5334 / V8).